Consider the following 65-residue polypeptide: MNSAHPCCDPVTCKPKRGEHCISGPCCRNCKFLSPGTICKKARGDDMNDYCTGISSDCPRNRYKS.

Positions 1-65 constitute a Disintegrin domain; that stretch reads MNSAHPCCDP…SDCPRNRYKS (65 aa). Disulfide bonds link cysteine 7–cysteine 30, cysteine 21–cysteine 27, cysteine 26–cysteine 51, and cysteine 39–cysteine 58. The Cell attachment site motif lies at 43 to 45; that stretch reads RGD.

It belongs to the disintegrin family. Dimeric disintegrin subfamily. Homodimer; disulfide-linked. Expressed by the venom gland.

It localises to the secreted. Binds and inhibits integrins alpha-IIb/beta-3 (ITGA2B/ITGB3), alpha-V/beta-3 (ITGAV/ITGB3) and alpha-5/beta-1 (ITGA5/ITGB1). The polypeptide is Disintegrin CC5 (Cerastes cerastes (Horned desert viper)).